The following is an 88-amino-acid chain: Small ribosomal subunit protein bS20 (88 aa).

2 disordered regions span residues 1-25 and 61-88; these read MANS…KARR and GVTK…ALGA.

It belongs to the bacterial ribosomal protein bS20 family.

Functionally, binds directly to 16S ribosomal RNA. This chain is Small ribosomal subunit protein bS20, found in Jannaschia sp. (strain CCS1).